The following is a 65-amino-acid chain: Conotoxin Cal16.1 (65 aa).

A signal peptide spans 1-19; it reads MRCLSIFVLLVLLVSFAVA. The propeptide occupies 20–48; that stretch reads ELDVEGEIVKQLLTRGTLKDADFWKRLEM. Gln49 is modified (pyrrolidone carboxylic acid). 2 disulfide bridges follow: Cys51–Cys60 and Cys53–Cys61. At Glu63 the chain carries Glutamic acid 1-amide.

As to expression, expressed by the venom duct.

It localises to the secreted. In terms of biological role, probable neurotoxin with unknown target. Possibly targets ion channels. This is Conotoxin Cal16.1 from Californiconus californicus (California cone).